A 726-amino-acid chain; its full sequence is Catalase-peroxidase (726 aa).

The segment at residues 91-214 (WHSAGTYRIA…LGAVQMGLIY (124 aa)) is a cross-link (tryptophyl-tyrosyl-methioninium (Trp-Tyr) (with M-240)). H92 serves as the catalytic Proton acceptor. Residues 214–240 (YVNPEGPNGNPDPLAAARDIRETFARM) constitute a cross-link (tryptophyl-tyrosyl-methioninium (Tyr-Met) (with W-91)). A heme b-binding site is contributed by H255. Residues 335–362 (AHQWRPKAGAGADSVPDPHDPNKRRTPS) form a disordered region.

Belongs to the peroxidase family. Peroxidase/catalase subfamily. Homodimer or homotetramer. Heme b serves as cofactor. In terms of processing, formation of the three residue Trp-Tyr-Met cross-link is important for the catalase, but not the peroxidase activity of the enzyme.

It catalyses the reaction H2O2 + AH2 = A + 2 H2O. It carries out the reaction 2 H2O2 = O2 + 2 H2O. Functionally, bifunctional enzyme with both catalase and broad-spectrum peroxidase activity. In Pseudomonas fluorescens (strain ATCC BAA-477 / NRRL B-23932 / Pf-5), this protein is Catalase-peroxidase.